A 126-amino-acid chain; its full sequence is Fluoride-specific ion channel FluC (126 aa).

4 consecutive transmembrane segments (helical) span residues 9-29 (LAVF…GFQL), 35-55 (LTAT…LYAI), 63-83 (LLHL…SFVL), and 94-114 (WSIG…AAIL). Na(+)-binding residues include Gly73 and Ser76.

The protein belongs to the fluoride channel Fluc/FEX (TC 1.A.43) family.

The protein localises to the cell inner membrane. The enzyme catalyses fluoride(in) = fluoride(out). Na(+) is not transported, but it plays an essential structural role and its presence is essential for fluoride channel function. In terms of biological role, fluoride-specific ion channel. Important for reducing fluoride concentration in the cell, thus reducing its toxicity. This Ruegeria pomeroyi (strain ATCC 700808 / DSM 15171 / DSS-3) (Silicibacter pomeroyi) protein is Fluoride-specific ion channel FluC.